Reading from the N-terminus, the 333-residue chain is DNA-directed RNA polymerase subunit alpha (333 aa).

Residues 1–246 form an alpha N-terminal domain (alpha-NTD) region; that stretch reads MKKMVQIKYK…AHLQVIGDVK (246 aa). The alpha C-terminal domain (alpha-CTD) stretch occupies residues 262–333; sequence VEPSIHSVDI…YNVTLNRGEK (72 aa).

It belongs to the RNA polymerase alpha chain family. As to quaternary structure, homodimer. The RNAP catalytic core consists of 2 alpha, 1 beta, 1 beta' and 1 omega subunit. When a sigma factor is associated with the core the holoenzyme is formed, which can initiate transcription.

It catalyses the reaction RNA(n) + a ribonucleoside 5'-triphosphate = RNA(n+1) + diphosphate. In terms of biological role, DNA-dependent RNA polymerase catalyzes the transcription of DNA into RNA using the four ribonucleoside triphosphates as substrates. The chain is DNA-directed RNA polymerase subunit alpha from Mycoplasmopsis pulmonis (strain UAB CTIP) (Mycoplasma pulmonis).